The following is a 217-amino-acid chain: Pyridoxine/pyridoxamine 5'-phosphate oxidase (217 aa).

Substrate contacts are provided by residues 13 to 16 and Lys71; that span reads RREY. Residues 66–71, 81–82, Arg87, Lys88, and Gln110 each bind FMN; these read RIVLLK and YT. Residues Tyr128, Arg132, and Ser136 each coordinate substrate. Residues 145 to 146 and Trp190 each bind FMN; that span reads QS. 196–198 is a substrate binding site; sequence RLH. An FMN-binding site is contributed by Arg200.

This sequence belongs to the pyridoxamine 5'-phosphate oxidase family. Homodimer. Requires FMN as cofactor.

The enzyme catalyses pyridoxamine 5'-phosphate + O2 + H2O = pyridoxal 5'-phosphate + H2O2 + NH4(+). It catalyses the reaction pyridoxine 5'-phosphate + O2 = pyridoxal 5'-phosphate + H2O2. The protein operates within cofactor metabolism; pyridoxal 5'-phosphate salvage; pyridoxal 5'-phosphate from pyridoxamine 5'-phosphate: step 1/1. It functions in the pathway cofactor metabolism; pyridoxal 5'-phosphate salvage; pyridoxal 5'-phosphate from pyridoxine 5'-phosphate: step 1/1. Its function is as follows. Catalyzes the oxidation of either pyridoxine 5'-phosphate (PNP) or pyridoxamine 5'-phosphate (PMP) into pyridoxal 5'-phosphate (PLP). This Yersinia pestis bv. Antiqua (strain Antiqua) protein is Pyridoxine/pyridoxamine 5'-phosphate oxidase.